The primary structure comprises 158 residues: Sec-independent protein translocase protein TatB (158 aa).

A helical transmembrane segment spans residues 1 to 21 (MFGISFSELLLVGLVALLVLG). Positions 73–158 (DEARKMFAPN…HDSSLPPRAP (86 aa)) are disordered. Positions 80 to 90 (APNQPSENSPE) are enriched in low complexity.

It belongs to the TatB family. In terms of assembly, the Tat system comprises two distinct complexes: a TatABC complex, containing multiple copies of TatA, TatB and TatC subunits, and a separate TatA complex, containing only TatA subunits. Substrates initially bind to the TatABC complex, which probably triggers association of the separate TatA complex to form the active translocon.

It is found in the cell inner membrane. In terms of biological role, part of the twin-arginine translocation (Tat) system that transports large folded proteins containing a characteristic twin-arginine motif in their signal peptide across membranes. Together with TatC, TatB is part of a receptor directly interacting with Tat signal peptides. TatB may form an oligomeric binding site that transiently accommodates folded Tat precursor proteins before their translocation. The chain is Sec-independent protein translocase protein TatB from Pseudomonas syringae pv. syringae (strain B728a).